We begin with the raw amino-acid sequence, 406 residues long: 4-hydroxy-3-methylbut-2-en-1-yl diphosphate synthase (ferredoxin) (406 aa).

[4Fe-4S] cluster contacts are provided by Cys314, Cys317, Cys348, and Glu355.

Belongs to the IspG family. Requires [4Fe-4S] cluster as cofactor.

The catalysed reaction is (2E)-4-hydroxy-3-methylbut-2-enyl diphosphate + 2 oxidized [2Fe-2S]-[ferredoxin] + H2O = 2-C-methyl-D-erythritol 2,4-cyclic diphosphate + 2 reduced [2Fe-2S]-[ferredoxin] + H(+). Its pathway is isoprenoid biosynthesis; isopentenyl diphosphate biosynthesis via DXP pathway; isopentenyl diphosphate from 1-deoxy-D-xylulose 5-phosphate: step 5/6. Functionally, converts 2C-methyl-D-erythritol 2,4-cyclodiphosphate (ME-2,4cPP) into 1-hydroxy-2-methyl-2-(E)-butenyl 4-diphosphate. The sequence is that of 4-hydroxy-3-methylbut-2-en-1-yl diphosphate synthase (ferredoxin) from Prochlorococcus marinus (strain MIT 9313).